The primary structure comprises 260 residues: Isopentenyl phosphate kinase (260 aa).

6-10 (KLGGS) is an ATP binding site. G55 is a substrate binding site. G56 is an ATP binding site. Substrate contacts are provided by H60 and G159. ATP-binding residues include D180, G217, and K221.

Belongs to the isopentenyl phosphate kinase family. Homodimer.

The enzyme catalyses isopentenyl phosphate + ATP = isopentenyl diphosphate + ADP. In terms of biological role, catalyzes the formation of isopentenyl diphosphate (IPP), the building block of all isoprenoids. Has no activity with farnesyl phosphate. The sequence is that of Isopentenyl phosphate kinase from Methanocaldococcus jannaschii (strain ATCC 43067 / DSM 2661 / JAL-1 / JCM 10045 / NBRC 100440) (Methanococcus jannaschii).